The sequence spans 405 residues: Argininosuccinate synthase (405 aa).

Residues 10 to 18 (AYSGGLDTS) and Ala-37 each bind ATP. Residues Tyr-88 and Ser-93 each coordinate L-citrulline. Gly-118 serves as a coordination point for ATP. Residues Thr-120, Asn-124, and Asp-125 each contribute to the L-aspartate site. Asn-124 is an L-citrulline binding site. Residues Arg-128, Ser-179, Ser-188, Glu-264, and Tyr-276 each contribute to the L-citrulline site.

It belongs to the argininosuccinate synthase family. Type 1 subfamily. In terms of assembly, homotetramer.

Its subcellular location is the cytoplasm. It catalyses the reaction L-citrulline + L-aspartate + ATP = 2-(N(omega)-L-arginino)succinate + AMP + diphosphate + H(+). It functions in the pathway amino-acid biosynthesis; L-arginine biosynthesis; L-arginine from L-ornithine and carbamoyl phosphate: step 2/3. The chain is Argininosuccinate synthase from Ectopseudomonas mendocina (strain ymp) (Pseudomonas mendocina).